We begin with the raw amino-acid sequence, 238 residues long: ATP-dependent dethiobiotin synthetase BioD (238 aa).

13–18 (DIGKTF) contributes to the ATP binding site. Thr-17 serves as a coordination point for Mg(2+). Residue Lys-38 is part of the active site. Ser-42 provides a ligand contact to substrate. ATP contacts are provided by residues Asp-55, 116–119 (EGSG), 209–211 (PRI), and Asn-216. Positions 55 and 116 each coordinate Mg(2+).

The protein belongs to the dethiobiotin synthetase family. Homodimer. It depends on Mg(2+) as a cofactor.

The protein localises to the cytoplasm. It catalyses the reaction (7R,8S)-7,8-diammoniononanoate + CO2 + ATP = (4R,5S)-dethiobiotin + ADP + phosphate + 3 H(+). It functions in the pathway cofactor biosynthesis; biotin biosynthesis; biotin from 7,8-diaminononanoate: step 1/2. Its function is as follows. Catalyzes a mechanistically unusual reaction, the ATP-dependent insertion of CO2 between the N7 and N8 nitrogen atoms of 7,8-diaminopelargonic acid (DAPA, also called 7,8-diammoniononanoate) to form a ureido ring. The chain is ATP-dependent dethiobiotin synthetase BioD from Clostridium novyi (strain NT).